A 200-amino-acid polypeptide reads, in one-letter code: Small ribosomal subunit protein uS4 (200 aa).

The disordered stretch occupies residues 22–41 (TGKELQKRPYAPGQHGPNQR). An S4 RNA-binding domain is found at 92–152 (SRLDNLVYRM…EKSRNLQVIK (61 aa)).

The protein belongs to the universal ribosomal protein uS4 family. As to quaternary structure, part of the 30S ribosomal subunit. Contacts protein S5. The interaction surface between S4 and S5 is involved in control of translational fidelity.

One of the primary rRNA binding proteins, it binds directly to 16S rRNA where it nucleates assembly of the body of the 30S subunit. Functionally, with S5 and S12 plays an important role in translational accuracy. The polypeptide is Small ribosomal subunit protein uS4 (Halalkalibacterium halodurans (strain ATCC BAA-125 / DSM 18197 / FERM 7344 / JCM 9153 / C-125) (Bacillus halodurans)).